The primary structure comprises 615 residues: Dihydroxy-acid dehydratase (615 aa).

Mg(2+) is bound at residue D81. C122 contacts [2Fe-2S] cluster. D123 and K124 together coordinate Mg(2+). Residue K124 is modified to N6-carboxylysine. C193 contributes to the [2Fe-2S] cluster binding site. E489 contacts Mg(2+). The Proton acceptor role is filled by S515.

Belongs to the IlvD/Edd family. Homodimer. Requires [2Fe-2S] cluster as cofactor. Mg(2+) serves as cofactor.

The enzyme catalyses (2R)-2,3-dihydroxy-3-methylbutanoate = 3-methyl-2-oxobutanoate + H2O. It catalyses the reaction (2R,3R)-2,3-dihydroxy-3-methylpentanoate = (S)-3-methyl-2-oxopentanoate + H2O. The protein operates within amino-acid biosynthesis; L-isoleucine biosynthesis; L-isoleucine from 2-oxobutanoate: step 3/4. It functions in the pathway amino-acid biosynthesis; L-valine biosynthesis; L-valine from pyruvate: step 3/4. Functionally, functions in the biosynthesis of branched-chain amino acids. Catalyzes the dehydration of (2R,3R)-2,3-dihydroxy-3-methylpentanoate (2,3-dihydroxy-3-methylvalerate) into 2-oxo-3-methylpentanoate (2-oxo-3-methylvalerate) and of (2R)-2,3-dihydroxy-3-methylbutanoate (2,3-dihydroxyisovalerate) into 2-oxo-3-methylbutanoate (2-oxoisovalerate), the penultimate precursor to L-isoleucine and L-valine, respectively. This Pseudomonas syringae pv. syringae (strain B728a) protein is Dihydroxy-acid dehydratase.